Reading from the N-terminus, the 178-residue chain is Large ribosomal subunit protein uL6 (178 aa).

Belongs to the universal ribosomal protein uL6 family. In terms of assembly, part of the 50S ribosomal subunit.

Functionally, this protein binds to the 23S rRNA, and is important in its secondary structure. It is located near the subunit interface in the base of the L7/L12 stalk, and near the tRNA binding site of the peptidyltransferase center. The polypeptide is Large ribosomal subunit protein uL6 (Francisella tularensis subsp. holarctica (strain FTNF002-00 / FTA)).